The sequence spans 187 residues: Transcriptional repressor NrdR (187 aa).

Residues 3-34 (CPFCRHPDSRVVDSRTTDDGTSIRRRRQCPDC) fold into a zinc finger. Positions 46-136 (LMVVKRSGVT…VYRAFDSLED (91 aa)) constitute an ATP-cone domain. Positions 146 to 187 (EEQRERPAVDDEDHEDAGAERQGTDRGSGGTVEVPVPATVAD) are disordered.

This sequence belongs to the NrdR family. The cofactor is Zn(2+).

In terms of biological role, negatively regulates transcription of bacterial ribonucleotide reductase nrd genes and operons by binding to NrdR-boxes. The sequence is that of Transcriptional repressor NrdR from Streptomyces avermitilis (strain ATCC 31267 / DSM 46492 / JCM 5070 / NBRC 14893 / NCIMB 12804 / NRRL 8165 / MA-4680).